We begin with the raw amino-acid sequence, 382 residues long: Pyrimidine monooxygenase RutA (382 aa).

FMN contacts are provided by residues 68–69, asparagine 134, glutamate 143, 159–160, and serine 209; these read IK and RY.

Belongs to the NtaA/SnaA/DszA monooxygenase family. RutA subfamily.

The catalysed reaction is uracil + FMNH2 + NADH + O2 = (Z)-3-ureidoacrylate + FMN + NAD(+) + H2O + H(+). It carries out the reaction thymine + FMNH2 + NADH + O2 = (Z)-2-methylureidoacrylate + FMN + NAD(+) + H2O + H(+). Its function is as follows. Catalyzes the pyrimidine ring opening between N-3 and C-4 by an unusual flavin hydroperoxide-catalyzed mechanism, adding oxygen atoms in the process to yield ureidoacrylate peracid, that immediately reacts with FMN forming ureidoacrylate and FMN-N(5)-oxide. The FMN-N(5)-oxide reacts spontaneously with NADH to produce FMN. Requires the flavin reductase RutF to regenerate FMN in vivo. The chain is Pyrimidine monooxygenase RutA from Shigella flexneri serotype X (strain 2002017).